Reading from the N-terminus, the 363-residue chain is Dihydroorotate dehydrogenase (quinone) (363 aa).

FMN contacts are provided by residues 62–66 (AGFDK) and threonine 86. Lysine 66 serves as a coordination point for substrate. 111–115 (NRMGF) is a binding site for substrate. FMN-binding residues include asparagine 142 and asparagine 175. Asparagine 175 is a binding site for substrate. Serine 178 (nucleophile) is an active-site residue. Asparagine 180 serves as a coordination point for substrate. Lysine 216 and threonine 244 together coordinate FMN. 245–246 (NT) is a substrate binding site. FMN contacts are provided by residues glycine 267, glycine 296, and 317–318 (YT).

This sequence belongs to the dihydroorotate dehydrogenase family. Type 2 subfamily. As to quaternary structure, monomer. The cofactor is FMN.

The protein resides in the cell membrane. It carries out the reaction (S)-dihydroorotate + a quinone = orotate + a quinol. The protein operates within pyrimidine metabolism; UMP biosynthesis via de novo pathway; orotate from (S)-dihydroorotate (quinone route): step 1/1. Functionally, catalyzes the conversion of dihydroorotate to orotate with quinone as electron acceptor. The chain is Dihydroorotate dehydrogenase (quinone) from Anaeromyxobacter sp. (strain Fw109-5).